A 204-amino-acid chain; its full sequence is Pre-mRNA leakage protein 1 (204 aa).

One can recognise an FHA domain in the interval 104-172; the sequence is YLVGRELGHS…NGTCLNNVVI (69 aa).

Belongs to the pre-mRNA retention and splicing (RES) complex composed of at least BUD13, IST3 and PML1.

It localises to the cytoplasm. The protein localises to the nucleus. Its function is as follows. Required for efficient splicing and pre-mRNA nuclear retention. The sequence is that of Pre-mRNA leakage protein 1 (PML1) from Saccharomyces cerevisiae (strain ATCC 204508 / S288c) (Baker's yeast).